Reading from the N-terminus, the 935-residue chain is UvrABC system protein A (935 aa).

ATP is bound at residue Gly31–Ser38. The C4-type zinc-finger motif lies at Cys254–Cys281. ABC transporter domains follow at residues Ile310–Ser579 and Lys599–Ala931. Gly631–Ser638 is an ATP binding site. A C4-type zinc finger spans residues Cys731–Cys757.

It belongs to the ABC transporter superfamily. UvrA family. In terms of assembly, forms a heterotetramer with UvrB during the search for lesions.

It localises to the cytoplasm. The UvrABC repair system catalyzes the recognition and processing of DNA lesions. UvrA is an ATPase and a DNA-binding protein. A damage recognition complex composed of 2 UvrA and 2 UvrB subunits scans DNA for abnormalities. When the presence of a lesion has been verified by UvrB, the UvrA molecules dissociate. This chain is UvrABC system protein A, found in Helicobacter pylori (strain ATCC 700392 / 26695) (Campylobacter pylori).